Reading from the N-terminus, the 565-residue chain is 2-isopropylmalate synthase (565 aa).

Residues 37–312 (PRWCSVDLRD…DPMIDLSDID (276 aa)) enclose the Pyruvate carboxyltransferase domain. Residues Asp46, His251, His253, and Asn287 each coordinate Mg(2+). Residues 446–565 (EGGDPAASLE…SAVNRASRES (120 aa)) form a regulatory domain region.

Belongs to the alpha-IPM synthase/homocitrate synthase family. LeuA type 2 subfamily. Homodimer. The cofactor is Mg(2+).

It is found in the cytoplasm. It carries out the reaction 3-methyl-2-oxobutanoate + acetyl-CoA + H2O = (2S)-2-isopropylmalate + CoA + H(+). It participates in amino-acid biosynthesis; L-leucine biosynthesis; L-leucine from 3-methyl-2-oxobutanoate: step 1/4. Catalyzes the condensation of the acetyl group of acetyl-CoA with 3-methyl-2-oxobutanoate (2-ketoisovalerate) to form 3-carboxy-3-hydroxy-4-methylpentanoate (2-isopropylmalate). In Parafrankia sp. (strain EAN1pec), this protein is 2-isopropylmalate synthase.